The chain runs to 340 residues: Aurora kinase A- and ninein-interacting protein (340 aa).

An interaction with AURKA region spans residues Gln-175–His-340. A compositionally biased stretch (basic and acidic residues) spans Ala-178–Thr-190. Residues Ala-178–Pro-209 form a disordered region. The tract at residues Arg-266–His-340 is interaction with RBBP8/CtIP. Ser-277 is subject to Phosphoserine. Positions Asp-293–Pro-317 are disordered. Polar residues predominate over residues Asn-296–Gly-313.

Belongs to the AUNIP family. As to quaternary structure, interacts (via C-terminus) with AURKA (via C-terminus). Interacts (via N-terminus) with NIN; this interaction blocks NIN phosphorylation by both AURKA and GSK3B. Identified in a complex with NIN and AURKA. Interacts with RBBP8/CtIP.

It is found in the nucleus. The protein localises to the chromosome. Its subcellular location is the cytoplasm. The protein resides in the cytoskeleton. It localises to the microtubule organizing center. It is found in the centrosome. The protein localises to the spindle pole. Its function is as follows. DNA-binding protein that accumulates at DNA double-strand breaks (DSBs) following DNA damage and promotes DNA resection and homologous recombination. Serves as a sensor of DNA damage: binds DNA with a strong preference for DNA substrates that mimic structures generated at stalled replication forks, and anchors RBBP8/CtIP to DSB sites to promote DNA end resection and ensuing homologous recombination repair. Inhibits non-homologous end joining (NHEJ). Required for the dynamic movement of AURKA at the centrosomes and spindle apparatus during the cell cycle. The sequence is that of Aurora kinase A- and ninein-interacting protein from Mus musculus (Mouse).